We begin with the raw amino-acid sequence, 69 residues long: uncharacterized protein (69 aa).

The first 21 residues, 1 to 21, serve as a signal peptide directing secretion; it reads MELLIPLSLLGLYLFSGTRDS. N41 is a glycosylation site (N-linked (GlcNAc...) asparagine).

Its subcellular location is the secreted. This is an uncharacterized protein from Dictyostelium discoideum (Social amoeba).